The sequence spans 121 residues: Small ribosomal subunit protein eS24 (121 aa).

It belongs to the eukaryotic ribosomal protein eS24 family.

In Pyrobaculum aerophilum (strain ATCC 51768 / DSM 7523 / JCM 9630 / CIP 104966 / NBRC 100827 / IM2), this protein is Small ribosomal subunit protein eS24.